A 346-amino-acid chain; its full sequence is Phosphoribosylformylglycinamidine cyclo-ligase (346 aa).

It belongs to the AIR synthase family.

The protein resides in the cytoplasm. It carries out the reaction 2-formamido-N(1)-(5-O-phospho-beta-D-ribosyl)acetamidine + ATP = 5-amino-1-(5-phospho-beta-D-ribosyl)imidazole + ADP + phosphate + H(+). It participates in purine metabolism; IMP biosynthesis via de novo pathway; 5-amino-1-(5-phospho-D-ribosyl)imidazole from N(2)-formyl-N(1)-(5-phospho-D-ribosyl)glycinamide: step 2/2. This is Phosphoribosylformylglycinamidine cyclo-ligase from Bacillus cereus (strain ATCC 10987 / NRS 248).